Reading from the N-terminus, the 327-residue chain is Ribosomal RNA large subunit methyltransferase F (327 aa).

This sequence belongs to the methyltransferase superfamily. METTL16/RlmF family.

Its subcellular location is the cytoplasm. The enzyme catalyses adenosine(1618) in 23S rRNA + S-adenosyl-L-methionine = N(6)-methyladenosine(1618) in 23S rRNA + S-adenosyl-L-homocysteine + H(+). Its function is as follows. Specifically methylates the adenine in position 1618 of 23S rRNA. This chain is Ribosomal RNA large subunit methyltransferase F, found in Marinomonas sp. (strain MWYL1).